Consider the following 101-residue polypeptide: Large ribosomal subunit protein uL23 (101 aa).

It belongs to the universal ribosomal protein uL23 family. As to quaternary structure, part of the 50S ribosomal subunit. Contacts protein L29, and trigger factor when it is bound to the ribosome.

One of the early assembly proteins it binds 23S rRNA. One of the proteins that surrounds the polypeptide exit tunnel on the outside of the ribosome. Forms the main docking site for trigger factor binding to the ribosome. The polypeptide is Large ribosomal subunit protein uL23 (Haemophilus ducreyi (strain 35000HP / ATCC 700724)).